We begin with the raw amino-acid sequence, 292 residues long: UPF0761 membrane protein Ping_3482 (292 aa).

6 helical membrane passes run 43–63, 100–120, 139–159, 179–199, 209–229, and 243–263; these read LLSI…FPVF, MSMM…STID, FTIY…SLAL, LLSL…YTLV, ALIG…LFRL, and ALAV…IVLI.

The protein belongs to the UPF0761 family.

It localises to the cell inner membrane. This is UPF0761 membrane protein Ping_3482 from Psychromonas ingrahamii (strain DSM 17664 / CCUG 51855 / 37).